The following is a 374-amino-acid chain: Alginate lyase (374 aa).

The N-terminal stretch at 1–23 (MHKTRLALSCLLGSLLLSGAVHA) is a signal peptide. Residues 62 to 63 (SK), 135 to 136 (HT), and Tyr-253 each bind substrate.

This sequence belongs to the polysaccharide lyase 5 family.

Its subcellular location is the periplasm. The catalysed reaction is Eliminative cleavage of alginate to give oligosaccharides with 4-deoxy-alpha-L-erythro-hex-4-enuronosyl groups at their non-reducing ends and beta-D-mannuronate at their reducing end.. Its function is as follows. Catalyzes the depolymerization of alginate by cleaving the beta-1,4 glycosidic bond between two adjacent sugar residues via a beta-elimination mechanism. May serve to degrade mislocalized alginate that is trapped in the periplasmic space. This Azotobacter vinelandii (strain DJ / ATCC BAA-1303) protein is Alginate lyase.